The sequence spans 338 residues: Mycothiol acetyltransferase (338 aa).

N-acetyltransferase domains follow at residues 29-173 (PETY…HQLP) and 181-338 (ISLR…NKFQ). Position 55 (Asp-55) interacts with 1D-myo-inositol 2-(L-cysteinylamino)-2-deoxy-alpha-D-glucopyranoside. Position 105-107 (105-107 (LVV)) interacts with acetyl-CoA. 1D-myo-inositol 2-(L-cysteinylamino)-2-deoxy-alpha-D-glucopyranoside is bound by residues Glu-208, Lys-248, and Glu-261. Residues 265-267 (VGI) and 272-278 (QGKGLGK) each bind acetyl-CoA. Tyr-299 is a 1D-myo-inositol 2-(L-cysteinylamino)-2-deoxy-alpha-D-glucopyranoside binding site.

It belongs to the acetyltransferase family. MshD subfamily. As to quaternary structure, monomer.

It catalyses the reaction 1D-myo-inositol 2-(L-cysteinylamino)-2-deoxy-alpha-D-glucopyranoside + acetyl-CoA = mycothiol + CoA + H(+). In terms of biological role, catalyzes the transfer of acetyl from acetyl-CoA to desacetylmycothiol (Cys-GlcN-Ins) to form mycothiol. This chain is Mycothiol acetyltransferase, found in Renibacterium salmoninarum (strain ATCC 33209 / DSM 20767 / JCM 11484 / NBRC 15589 / NCIMB 2235).